Here is a 233-residue protein sequence, read N- to C-terminus: Leucyl/phenylalanyl-tRNA--protein transferase (233 aa).

This sequence belongs to the L/F-transferase family.

Its subcellular location is the cytoplasm. It catalyses the reaction N-terminal L-lysyl-[protein] + L-leucyl-tRNA(Leu) = N-terminal L-leucyl-L-lysyl-[protein] + tRNA(Leu) + H(+). It carries out the reaction N-terminal L-arginyl-[protein] + L-leucyl-tRNA(Leu) = N-terminal L-leucyl-L-arginyl-[protein] + tRNA(Leu) + H(+). The catalysed reaction is L-phenylalanyl-tRNA(Phe) + an N-terminal L-alpha-aminoacyl-[protein] = an N-terminal L-phenylalanyl-L-alpha-aminoacyl-[protein] + tRNA(Phe). Functions in the N-end rule pathway of protein degradation where it conjugates Leu, Phe and, less efficiently, Met from aminoacyl-tRNAs to the N-termini of proteins containing an N-terminal arginine or lysine. This chain is Leucyl/phenylalanyl-tRNA--protein transferase, found in Klebsiella pneumoniae subsp. pneumoniae (strain ATCC 700721 / MGH 78578).